Here is a 760-residue protein sequence, read N- to C-terminus: Pentatricopeptide repeat-containing protein At1g20230 (760 aa).

15 PPR repeats span residues 49–79 (DGYI…IPDP), 80–114 (TIYS…GLIP), 115–149 (DSHV…GLDM), 150–180 (DAFV…MSDK), 181–215 (DVVT…GIEA), 216–250 (NIVS…GFCP), 251–285 (DQVT…GLLK), 286–316 (DKCV…FEMM), 317–351 (EAGV…TMEL), 352–386 (NVVS…GVKP), 387–421 (NHVT…HLLD), 422–452 (NVHV…MPTK), 453–487 (NLVC…RLKP), 488–523 (DFIS…GIKP), and 524–554 (RLEH…MPFE). A type E motif region spans residues 559 to 634 (VWGALLNSCR…NPGCSWIQVK (76 aa)). The interval 635 to 665 (NRVYTLLAGDKSHPQIDQITEKMDEISKEMR) is type E(+) motif. The interval 666–760 (KSGHRPNLDF…DGICSCGDFW (95 aa)) is type DYW motif.

It belongs to the PPR family. PCMP-H subfamily.

This is Pentatricopeptide repeat-containing protein At1g20230 (PCMP-H21) from Arabidopsis thaliana (Mouse-ear cress).